Reading from the N-terminus, the 494-residue chain is MTQYVSNTRSGEQEAFEPDDPENVLVYTCGLTVSDDAHLGHARLWVQSDVMTRWLSHAGYGVRHVQNVTDVNEKIVARVGADGLGDTEAAVAAHYTQSVIDDMRALNLARADVYPRVSEHVPEIIDLIGDLVDAGYAYEAGGSVYFDVRRFEEYGALSGQQVDELDPQGPDAEQAEKRHPADFALWKAGGVSPDDANTHRDDELPPLDGERGQTWASPWGEGRPGWHIECSAMAMTHLDDHIDIHVGGQDLVFPHHENEIAQSEAASGERFADHWLHVRLLETDGEKMSSSLGNFFTVSNAVAERGPNVVRMLLVSTSYTQRQTYSEATVSEATQRWERLQRAHERAADAIDSVAAHAKPADDALRTAVADARGEFAAAMRADFNTRAAVSALLELASAVNRHVDGTDTYDYQGLHDAVDAFETLGGDVLGLQFDDGAGEDAVSLADDVIDLVLDVREQERTAGNYERADDLRDRLEALGVSVEDTDDGATVRR.

Residue Cys29 coordinates Zn(2+). A 'HIGH' region motif is present at residues 31-41 (LTVSDDAHLGH). The segment at 187–220 (KAGGVSPDDANTHRDDELPPLDGERGQTWASPWG) is disordered. Residues 196 to 211 (ANTHRDDELPPLDGER) are compositionally biased toward basic and acidic residues. Residues Cys230, His255, and Glu259 each contribute to the Zn(2+) site. Residues 287 to 291 (KMSSS) carry the 'KMSKS' region motif.

The protein belongs to the class-I aminoacyl-tRNA synthetase family. Zn(2+) is required as a cofactor.

Its subcellular location is the cytoplasm. The enzyme catalyses tRNA(Cys) + L-cysteine + ATP = L-cysteinyl-tRNA(Cys) + AMP + diphosphate. This Halobacterium salinarum (strain ATCC 700922 / JCM 11081 / NRC-1) (Halobacterium halobium) protein is Cysteine--tRNA ligase.